The chain runs to 68 residues: Virion membrane protein OPG139 (68 aa).

The helical transmembrane segment at 1–21 threads the bilayer; that stretch reads MIGILLLIGICVAVTVAILYA. Over 22–68 the chain is Virion surface; that stretch reads MYNKIKNSQNPSPNVNLPPPETRNTRFVNNLEKDHISSLYNLVKSSV.

The protein belongs to the orthopoxvirus OPG139 family. In terms of processing, phosphorylated by a OPG054-independent mechanism.

It localises to the virion membrane. In terms of biological role, essential for the encapsidation of DNA into immature virions (IV) and the subsequent maturation of IV into mature virions (MV). This Homo sapiens (Human) protein is Virion membrane protein OPG139 (OPG139).